A 420-amino-acid polypeptide reads, in one-letter code: Serine hydroxymethyltransferase (420 aa).

Residues Leu-121 and 125–127 (GHL) each bind (6S)-5,6,7,8-tetrahydrofolate. Position 230 is an N6-(pyridoxal phosphate)lysine (Lys-230). 355–357 (SPF) contacts (6S)-5,6,7,8-tetrahydrofolate.

This sequence belongs to the SHMT family. Homodimer. It depends on pyridoxal 5'-phosphate as a cofactor.

It localises to the cytoplasm. The enzyme catalyses (6R)-5,10-methylene-5,6,7,8-tetrahydrofolate + glycine + H2O = (6S)-5,6,7,8-tetrahydrofolate + L-serine. It functions in the pathway one-carbon metabolism; tetrahydrofolate interconversion. The protein operates within amino-acid biosynthesis; glycine biosynthesis; glycine from L-serine: step 1/1. Functionally, catalyzes the reversible interconversion of serine and glycine with tetrahydrofolate (THF) serving as the one-carbon carrier. This reaction serves as the major source of one-carbon groups required for the biosynthesis of purines, thymidylate, methionine, and other important biomolecules. Also exhibits THF-independent aldolase activity toward beta-hydroxyamino acids, producing glycine and aldehydes, via a retro-aldol mechanism. In Streptococcus mutans serotype c (strain ATCC 700610 / UA159), this protein is Serine hydroxymethyltransferase.